We begin with the raw amino-acid sequence, 65 residues long: Small ribosomal subunit protein bS21 (65 aa).

Residues 43-65 are disordered; it reads VDDRLKRARSKRRAQRANEESNA. Positions 48-57 are enriched in basic residues; it reads KRARSKRRAQ.

The protein belongs to the bacterial ribosomal protein bS21 family.

The chain is Small ribosomal subunit protein bS21 from Chloroherpeton thalassium (strain ATCC 35110 / GB-78).